The chain runs to 527 residues: MAPERLRSRALSAFKLRGLMLRGEAVKYLTEALQSINEIELEDALEKIIDAVEKQPLSSNMIERSVVEAAVQECSQSVDETIDHIFNIIGAFDIPRFVYNSERKKFLPLLMTNHPAPNLFGTARDKAELFRERYTILHQRTHRHELFTPPVIGSHPDESGSKFQLKTIETLLGSTSKIGDVIVLGMITQLKEGKFFLEDPTGTIQLDLSKAQFHSGLYTESCFVLAEGWFEDQVFHVNAFGFPPTEPSSTTRAYYGNTNFFGGPSNTSVKTSAKLKQLEDENKDAMFVFISDVWLDQVEVLEKLHIMFSGYSPAPPTCFILCGNFSSAPYGKNQVQALKDSLKTLADIICGYPNIHQSSRFVFVPGPEDPGFGSILPRPPFAESITNEFRQRVPFSVFTTNPCRIQYCTQEIIVFREDLVNKMCRNCVRFPSSNLDIPNHFVKTVLSQGHLTPLPLYVCPVYWAYDYALRVYPVPDLLVIADKYDPFTLTNTECLCINPGSFPRSGFSFKVFYPSNKVVEDSKLQGF.

Belongs to the DNA polymerase epsilon subunit B family. In terms of assembly, component of the DNA polymerase epsilon complex consisting of four subunits: the catalytic subunit POLE and the accessory subunits POLE2, POLE3 and POLE4.

Its subcellular location is the nucleus. Functionally, accessory component of the DNA polymerase epsilon complex. Participates in DNA repair and in chromosomal DNA replication. The protein is DNA polymerase epsilon subunit 2 (POLE2) of Bos taurus (Bovine).